The sequence spans 226 residues: Ribonuclease 3 (226 aa).

The 123-residue stretch at 7–129 folds into the RNase III domain; it reads LARLSRTLGY…IIGAVYLDAN (123 aa). E42 lines the Mg(2+) pocket. D46 is an active-site residue. Mg(2+) is bound by residues D115 and E118. E118 is an active-site residue. One can recognise a DRBM domain in the interval 156–226; it reads DPKTILQEYL…AAQILELINK (71 aa).

This sequence belongs to the ribonuclease III family. As to quaternary structure, homodimer. Requires Mg(2+) as cofactor.

Its subcellular location is the cytoplasm. The catalysed reaction is Endonucleolytic cleavage to 5'-phosphomonoester.. In terms of biological role, digests double-stranded RNA. Involved in the processing of primary rRNA transcript to yield the immediate precursors to the large and small rRNAs (23S and 16S). Processes some mRNAs, and tRNAs when they are encoded in the rRNA operon. Processes pre-crRNA and tracrRNA of type II CRISPR loci if present in the organism. The sequence is that of Ribonuclease 3 from Shewanella denitrificans (strain OS217 / ATCC BAA-1090 / DSM 15013).